Reading from the N-terminus, the 384-residue chain is Bifunctional enzyme IspD/IspF (384 aa).

2-C-methyl-D-erythritol 4-phosphate cytidylyltransferase regions lie at residues 1-227 (MAKV…EGEQ) and 1-228 (MAKV…GEQR). The segment at 228 to 384 (RIGSGFDVHR…QATALITLPF (157 aa)) is 2-C-methyl-D-erythritol 2,4-cyclodiphosphate synthase. A divalent metal cation contacts are provided by D234 and H236. 4-CDP-2-C-methyl-D-erythritol 2-phosphate contacts are provided by residues 234-236 (DVH) and 260-261 (HS). Residue H268 coordinates a divalent metal cation. 4-CDP-2-C-methyl-D-erythritol 2-phosphate is bound by residues 282-284 (DIG), 358-361 (TTTE), F365, and R368.

It in the N-terminal section; belongs to the IspD/TarI cytidylyltransferase family. IspD subfamily. In the C-terminal section; belongs to the IspF family. A divalent metal cation serves as cofactor.

The catalysed reaction is 2-C-methyl-D-erythritol 4-phosphate + CTP + H(+) = 4-CDP-2-C-methyl-D-erythritol + diphosphate. The enzyme catalyses 4-CDP-2-C-methyl-D-erythritol 2-phosphate = 2-C-methyl-D-erythritol 2,4-cyclic diphosphate + CMP. Its pathway is isoprenoid biosynthesis; isopentenyl diphosphate biosynthesis via DXP pathway; isopentenyl diphosphate from 1-deoxy-D-xylulose 5-phosphate: step 2/6. The protein operates within isoprenoid biosynthesis; isopentenyl diphosphate biosynthesis via DXP pathway; isopentenyl diphosphate from 1-deoxy-D-xylulose 5-phosphate: step 4/6. Its function is as follows. Bifunctional enzyme that catalyzes the formation of 4-diphosphocytidyl-2-C-methyl-D-erythritol from CTP and 2-C-methyl-D-erythritol 4-phosphate (MEP) (IspD), and catalyzes the conversion of 4-diphosphocytidyl-2-C-methyl-D-erythritol 2-phosphate (CDP-ME2P) to 2-C-methyl-D-erythritol 2,4-cyclodiphosphate (ME-CPP) with a corresponding release of cytidine 5-monophosphate (CMP) (IspF). The sequence is that of Bifunctional enzyme IspD/IspF from Rhodospirillum rubrum (strain ATCC 11170 / ATH 1.1.1 / DSM 467 / LMG 4362 / NCIMB 8255 / S1).